The chain runs to 431 residues: Female gametocyte surface protein P47 (431 aa).

Residues 1–20 form the signal peptide; sequence MKGFTGASIIVFYLIKGYLS. Residues 26–178 form the 6-Cys 1 domain; it reads NGYVCDFKFN…GLVKIILNNQ (153 aa). Cystine bridges form between cysteine 30–cysteine 55, cysteine 70–cysteine 145, and cysteine 88–cysteine 143. N-linked (GlcNAc...) asparagine glycosylation is present at asparagine 45. N-linked (GlcNAc...) asparagine glycosylation occurs at asparagine 239. The 6-Cys 2 domain occupies 278–413; sequence NIDGCDFTVP…MELKISSSKN (136 aa). 3 cysteine pairs are disulfide-bonded: cysteine 282–cysteine 309, cysteine 326–cysteine 395, and cysteine 335–cysteine 393. Serine 409 carries GPI-anchor amidated serine lipidation. The propeptide at 410–431 is removed in mature form; the sequence is SSKNIFISFILLSIIVSIFYLF.

It is found in the cell surface. Its subcellular location is the cell membrane. Required for female fertility. The chain is Female gametocyte surface protein P47 (PB47) from Plasmodium berghei (strain Anka).